The sequence spans 381 residues: 4-hydroxyphenylpyruvate dioxygenase (381 aa).

VOC domains are found at residues 22-156 and 184-338; these read GMDA…LVER and AVDH…IFTK. Fe cation is bound by residues His187, His270, and Glu349.

It belongs to the 4HPPD family. As to quaternary structure, homodimer. Fe cation is required as a cofactor.

It catalyses the reaction 3-(4-hydroxyphenyl)pyruvate + O2 = homogentisate + CO2. It participates in amino-acid degradation; L-phenylalanine degradation; acetoacetate and fumarate from L-phenylalanine: step 3/6. In Streptomyces coelicolor (strain ATCC BAA-471 / A3(2) / M145), this protein is 4-hydroxyphenylpyruvate dioxygenase (hpd).